Here is a 281-residue protein sequence, read N- to C-terminus: Putative glutamine amidotransferase-like protein RP404 (281 aa).

The 263-residue stretch at 19–281 folds into the Glutamine amidotransferase type-1 domain; that stretch reads KYTYADFPWY…KALVKASKYI (263 aa). One can recognise an RPE1 insert domain in the interval 139 to 174; it reads RHFSKLTYSKKFECNTEAFATTVYTLPIKLEFENAP.

The chain is Putative glutamine amidotransferase-like protein RP404 from Rickettsia prowazekii (strain Madrid E).